The following is a 388-amino-acid chain: Probable pectin lyase F-1 (388 aa).

The N-terminal stretch at 1 to 19 (MKTATFSTLLALSASAVNA) is a signal peptide. Cysteine 80 and cysteine 103 are joined by a disulfide. An N-linked (GlcNAc...) asparagine glycan is attached at asparagine 126. Residue arginine 253 is part of the active site. A disulfide bond links cysteine 328 and cysteine 336.

This sequence belongs to the polysaccharide lyase 1 family.

The protein resides in the secreted. It carries out the reaction Eliminative cleavage of (1-&gt;4)-alpha-D-galacturonan methyl ester to give oligosaccharides with 4-deoxy-6-O-methyl-alpha-D-galact-4-enuronosyl groups at their non-reducing ends.. In terms of biological role, pectinolytic enzymes consist of four classes of enzymes: pectin lyase, polygalacturonase, pectin methylesterase and rhamnogalacturonase. Among pectinolytic enzymes, pectin lyase is the most important in depolymerization of pectin, since it cleaves internal glycosidic bonds of highly methylated pectins. In Aspergillus terreus (strain NIH 2624 / FGSC A1156), this protein is Probable pectin lyase F-1 (pelF-1).